A 747-amino-acid polypeptide reads, in one-letter code: Homeobox-leucine zipper protein GLABRA 2 (747 aa).

Residues 31 to 112 (RNASSGSTNP…KKYHRHTTDQ (82 aa)) are disordered. The segment covering 58-68 (EMSSENSGPTR) has biased composition (polar residues). The segment covering 73–90 (EDLEGEDHDDEEEEEEDG) has biased composition (acidic residues). Residues 97 to 107 (TNKRKRKKYHR) are compositionally biased toward basic residues. A DNA-binding region (homeobox) is located at residues 101–160 (KRKKYHRHTTDQIRHMEALFKETPHPDEKQRQQLSKQLGLAPRQVKFWFQNRRTQIKAIQ). The stretch at 155-223 (QIKAIQERHE…LDKLRAALGR (69 aa)) forms a coiled coil. In terms of domain architecture, START spans 250 to 489 (FALEKSRIAE…LQLHCERLVF (240 aa)).

It belongs to the HD-ZIP homeobox family. Class IV subfamily. Interacts with GIR1 and GIR2. In terms of tissue distribution, expressed in individual developing trichome cells of the emerging leaf primordia. Expressed in differentiating hairless cells of root epidermis.

It localises to the nucleus. Its function is as follows. Transcription factor involved in the determination of epidermal cell identity. Required for correct morphological development and maturation of trichomes. Regulates the frequency of trichome initiation and determines trichome spacing. Acts as a negative factor for root hair development. Required for ectopic repression of root hair development in a subset of epidermal cells. May suppress hair formation in root epidermis by promoting differentiation into hairless epidermal cells. Directly suppresses the bHLH transcription factor genes, RHD6, RSL1, RSL2, LRL1, and LRL2, which have diverse functions in root hair development. Required for normal development of seed coat mucilage. Involved in the control of seed oil accumulation. Acts as a negative regulator of anthocyanin biosynthesis. May directly repress the expression of some component genes from the MYB-bHLH-WD40 (MBW) transcriptional activator complex. The MBW complex activates the transcription of late biosynthesis genes in the flavonoid pathway, leading to the production of anthocyanins. The polypeptide is Homeobox-leucine zipper protein GLABRA 2 (Arabidopsis thaliana (Mouse-ear cress)).